A 427-amino-acid chain; its full sequence is Adenylosuccinate synthetase (427 aa).

GTP contacts are provided by residues 12 to 18 (GDEGKGK) and 40 to 42 (GHT). Catalysis depends on aspartate 13, which acts as the Proton acceptor. The Mg(2+) site is built by aspartate 13 and glycine 40. Residues 13-16 (DEGK), 38-41 (NAGH), threonine 128, arginine 142, glutamine 223, threonine 238, and arginine 302 each bind IMP. Catalysis depends on histidine 41, which acts as the Proton donor. 298–304 (VTTGRAR) is a binding site for substrate. Residues arginine 304, 330 to 332 (KLD), and 412 to 414 (GVG) each bind GTP.

It belongs to the adenylosuccinate synthetase family. In terms of assembly, homodimer. The cofactor is Mg(2+).

The protein resides in the cytoplasm. It carries out the reaction IMP + L-aspartate + GTP = N(6)-(1,2-dicarboxyethyl)-AMP + GDP + phosphate + 2 H(+). It functions in the pathway purine metabolism; AMP biosynthesis via de novo pathway; AMP from IMP: step 1/2. Its function is as follows. Plays an important role in the de novo pathway of purine nucleotide biosynthesis. Catalyzes the first committed step in the biosynthesis of AMP from IMP. This is Adenylosuccinate synthetase from Frankia casuarinae (strain DSM 45818 / CECT 9043 / HFP020203 / CcI3).